The sequence spans 260 residues: Global transcriptional regulator CodY (260 aa).

The tract at residues 1–159 (MPNLLEKTRK…SSTVVGIQLL (159 aa)) is GAF domain. The segment at residues 207 to 226 (ASVIADRIGITRSVIVNALR) is a DNA-binding region (H-T-H motif).

It belongs to the CodY family.

It localises to the cytoplasm. DNA-binding global transcriptional regulator which is involved in the adaptive response to starvation and acts by directly or indirectly controlling the expression of numerous genes in response to nutrient availability. During rapid exponential growth, CodY is highly active and represses genes whose products allow adaptation to nutrient depletion. The protein is Global transcriptional regulator CodY of Streptococcus uberis (strain ATCC BAA-854 / 0140J).